The following is a 420-amino-acid chain: Histidine--tRNA ligase (420 aa).

It belongs to the class-II aminoacyl-tRNA synthetase family. In terms of assembly, homodimer.

Its subcellular location is the cytoplasm. It catalyses the reaction tRNA(His) + L-histidine + ATP = L-histidyl-tRNA(His) + AMP + diphosphate + H(+). This is Histidine--tRNA ligase from Acholeplasma laidlawii (strain PG-8A).